Reading from the N-terminus, the 182-residue chain is uncharacterized protein (182 aa).

This sequence to H.pylori HP0274.

This is an uncharacterized protein from Methanocaldococcus jannaschii (strain ATCC 43067 / DSM 2661 / JAL-1 / JCM 10045 / NBRC 100440) (Methanococcus jannaschii).